The following is a 120-amino-acid chain: Large ribosomal subunit protein bL17 (120 aa).

The protein belongs to the bacterial ribosomal protein bL17 family. In terms of assembly, part of the 50S ribosomal subunit. Contacts protein L32.

The polypeptide is Large ribosomal subunit protein bL17 (Geobacillus kaustophilus (strain HTA426)).